The primary structure comprises 275 residues: Large ribosomal subunit protein uL2 (275 aa).

Positions 216-275 are disordered; sequence GIRPQTRGSAMNPIDHPHGGGEGKTNSGRHPVTPWGMPTKGYKTRKKKASDKLIISKRKK. Residues 257–275 show a composition bias toward basic residues; it reads YKTRKKKASDKLIISKRKK.

It belongs to the universal ribosomal protein uL2 family. Part of the 50S ribosomal subunit. Forms a bridge to the 30S subunit in the 70S ribosome.

In terms of biological role, one of the primary rRNA binding proteins. Required for association of the 30S and 50S subunits to form the 70S ribosome, for tRNA binding and peptide bond formation. It has been suggested to have peptidyltransferase activity; this is somewhat controversial. Makes several contacts with the 16S rRNA in the 70S ribosome. The chain is Large ribosomal subunit protein uL2 from Aliarcobacter butzleri (strain RM4018) (Arcobacter butzleri).